We begin with the raw amino-acid sequence, 673 residues long: tRNA uridine 5-carboxymethylaminomethyl modification enzyme MnmG (673 aa).

17–22 (GGGHAG) contributes to the FAD binding site. 284–298 (GPRYCPSVEDKINRF) serves as a coordination point for NAD(+).

It belongs to the MnmG family. As to quaternary structure, homodimer. Heterotetramer of two MnmE and two MnmG subunits. Requires FAD as cofactor.

The protein localises to the cytoplasm. In terms of biological role, NAD-binding protein involved in the addition of a carboxymethylaminomethyl (cmnm) group at the wobble position (U34) of certain tRNAs, forming tRNA-cmnm(5)s(2)U34. This chain is tRNA uridine 5-carboxymethylaminomethyl modification enzyme MnmG, found in Polaromonas sp. (strain JS666 / ATCC BAA-500).